Consider the following 528-residue polypeptide: Berberine bridge enzyme-like 17 (528 aa).

A signal peptide spans 1 to 19 (MKEVVYVLLLVLLVSVSDA). N20, N35, N52, and N72 each carry an N-linked (GlcNAc...) asparagine glycan. C32 and C94 are oxidised to a cystine. One can recognise an FAD-binding PCMH-type domain in the interval 69 to 246 (LNPNDTKLIA…LSWKINLVDV (178 aa)). Residues 109–171 (HDYEGLSFTS…KTLAFAGGVC (63 aa)) constitute a cross-link (6-(S-cysteinyl)-8alpha-(pros-histidyl)-FAD (His-Cys)). N-linked (GlcNAc...) asparagine glycans are attached at residues N256, N340, and N439.

It belongs to the oxygen-dependent FAD-linked oxidoreductase family. FAD serves as cofactor. The FAD cofactor is bound via a bicovalent 6-S-cysteinyl, 8alpha-N1-histidyl FAD linkage.

The protein localises to the secreted. Its subcellular location is the cell wall. The polypeptide is Berberine bridge enzyme-like 17 (Arabidopsis thaliana (Mouse-ear cress)).